Here is a 575-residue protein sequence, read N- to C-terminus: Mitochondrial 2-methylisocitrate lyase ICL2 (575 aa).

Cys-238 is an active-site residue.

This sequence belongs to the isocitrate lyase/PEP mutase superfamily. Isocitrate lyase family.

The protein localises to the mitochondrion matrix. The catalysed reaction is (2S,3R)-3-hydroxybutane-1,2,3-tricarboxylate = pyruvate + succinate. It participates in organic acid metabolism; propanoate degradation. Its function is as follows. Catalyzes the formation of pyruvate and succinate from 2-methylisocitrate during the metabolism of endogenous propionyl-CoA. Does not act on isocitrate. This Saccharomyces cerevisiae (strain ATCC 204508 / S288c) (Baker's yeast) protein is Mitochondrial 2-methylisocitrate lyase ICL2 (ICL2).